The primary structure comprises 186 residues: ADP-ribosylation factor-like protein 6 (186 aa).

A lipid anchor (N-myristoyl glycine) is attached at G2. Residues 24-31, T50, 69-73, G72, 130-133, and A164 each bind GTP; these read GLDNSGKT, DMSGQ, and NKMD. Position 50 (T50) interacts with Mg(2+).

The protein belongs to the small GTPase superfamily. Arf family. Expressed in brain, heart and eye. Isoform 2 is expressed only in the retina.

Its subcellular location is the cell projection. The protein localises to the cilium membrane. It localises to the cytoplasm. The protein resides in the cytoskeleton. It is found in the cilium axoneme. Its subcellular location is the cilium basal body. In terms of biological role, probably involved in membrane protein trafficking at the base of the ciliary organelle. May function in cilia biogenesis. Isoform 2 is required for proper retinal function and organization. The sequence is that of ADP-ribosylation factor-like protein 6 (arl6) from Danio rerio (Zebrafish).